The chain runs to 346 residues: Cyclin-dependent kinase 20 (346 aa).

A Protein kinase domain is found at 4–288 (YCILGRIGEG…ASKALLHQYF (285 aa)). Residues 10 to 18 (IGEGAHGIV) and K33 each bind ATP. D127 serves as the catalytic Proton acceptor.

This sequence belongs to the protein kinase superfamily. CMGC Ser/Thr protein kinase family. CDC2/CDKX subfamily. As to quaternary structure, monomer. Interacts with TBC1D32 and MAK.

It localises to the nucleus. The protein localises to the cytoplasm. It is found in the cell projection. Its subcellular location is the cilium. The catalysed reaction is L-seryl-[protein] + ATP = O-phospho-L-seryl-[protein] + ADP + H(+). The enzyme catalyses L-threonyl-[protein] + ATP = O-phospho-L-threonyl-[protein] + ADP + H(+). In terms of biological role, required for high-level Shh responses in the developing neural tube. Together with TBC1D32, controls the structure of the primary cilium by coordinating assembly of the ciliary membrane and axoneme, allowing GLI2 to be properly activated in response to SHH signaling. Involved in cell growth. Activates CDK2, a kinase involved in the control of the cell cycle, by phosphorylating residue 'Thr-160'. The chain is Cyclin-dependent kinase 20 (CDK20) from Pongo abelii (Sumatran orangutan).